Reading from the N-terminus, the 700-residue chain is Protein claret segregational (700 aa).

Residues Ser-94 and Ser-96 each carry the phosphoserine modification. A disordered region spans residues 141 to 185 (APSSITATAVKRPPVTRPAPRAAGGAAAKKPAGTGAAASSGAAAA). Positions 149–185 (AVKRPPVTRPAPRAAGGAAAKKPAGTGAAASSGAAAA) are enriched in low complexity. Residues 196-346 (KARFHDLLEK…ELHNTVMDLR (151 aa)) adopt a coiled-coil conformation. The Kinesin motor domain occupies 348–670 (NIRVFCRIRP…LRFAASVNSC (323 aa)). 434-441 (GQTGSGKT) serves as a coordination point for ATP. The required for minus-end directionality stretch occupies residues 664–668 (AASVN). The disordered stretch occupies residues 681–700 (LNNSVANSSTQSNNSGSFDK).

Belongs to the TRAFAC class myosin-kinesin ATPase superfamily. Kinesin family. NCD subfamily.

Its subcellular location is the cytoplasm. It is found in the cytoskeleton. The enzyme catalyses ATP + H2O = ADP + phosphate + H(+). In terms of biological role, minus-end-directed microtubule-based motor protein. Has ATPase activity. Required for normal chromosomal segregation in meiosis in females, and in early mitotic divisions of the embryo. The polypeptide is Protein claret segregational (ncd) (Drosophila melanogaster (Fruit fly)).